The following is a 230-amino-acid chain: 5'-methylthioadenosine/S-adenosylhomocysteine nucleosidase (230 aa).

E12 serves as the catalytic Proton acceptor. Residues G78, I152, and 173–174 contribute to the substrate site; that span reads ME. Catalysis depends on D197, which acts as the Proton donor.

The protein belongs to the PNP/UDP phosphorylase family. MtnN subfamily.

The enzyme catalyses S-adenosyl-L-homocysteine + H2O = S-(5-deoxy-D-ribos-5-yl)-L-homocysteine + adenine. The catalysed reaction is S-methyl-5'-thioadenosine + H2O = 5-(methylsulfanyl)-D-ribose + adenine. It carries out the reaction 5'-deoxyadenosine + H2O = 5-deoxy-D-ribose + adenine. Its pathway is amino-acid biosynthesis; L-methionine biosynthesis via salvage pathway; S-methyl-5-thio-alpha-D-ribose 1-phosphate from S-methyl-5'-thioadenosine (hydrolase route): step 1/2. Its function is as follows. Catalyzes the irreversible cleavage of the glycosidic bond in both 5'-methylthioadenosine (MTA) and S-adenosylhomocysteine (SAH/AdoHcy) to adenine and the corresponding thioribose, 5'-methylthioribose and S-ribosylhomocysteine, respectively. Also cleaves 5'-deoxyadenosine, a toxic by-product of radical S-adenosylmethionine (SAM) enzymes, into 5-deoxyribose and adenine. The chain is 5'-methylthioadenosine/S-adenosylhomocysteine nucleosidase from Haemophilus influenzae (strain 86-028NP).